Here is a 279-residue protein sequence, read N- to C-terminus: NH(3)-dependent NAD(+) synthetase (279 aa).

Position 46–53 (G46–S53) interacts with ATP. A Mg(2+)-binding site is contributed by D52. Residue R139 coordinates deamido-NAD(+). T159 provides a ligand contact to ATP. E164 provides a ligand contact to Mg(2+). Deamido-NAD(+) contacts are provided by K172 and D179. Residues K188 and T210 each contribute to the ATP site. H259–K260 contacts deamido-NAD(+).

Belongs to the NAD synthetase family. Homodimer.

The catalysed reaction is deamido-NAD(+) + NH4(+) + ATP = AMP + diphosphate + NAD(+) + H(+). The protein operates within cofactor biosynthesis; NAD(+) biosynthesis; NAD(+) from deamido-NAD(+) (ammonia route): step 1/1. Catalyzes the ATP-dependent amidation of deamido-NAD to form NAD. Uses ammonia as a nitrogen source. This Leifsonia xyli subsp. xyli (strain CTCB07) protein is NH(3)-dependent NAD(+) synthetase.